A 176-amino-acid chain; its full sequence is Warthog protein 5 (176 aa).

Residues 1-21 (MCSMWLMASWLMAFVAGSTLA) form the signal peptide. Asn-70 carries an N-linked (GlcNAc...) asparagine glycan.

Expressed in seam cells, excretory cell, reproductive system, pharynx, pharyngeal-intestinal valve cells, neurons and neuronal support cells.

The protein localises to the secreted. Its function is as follows. Intercellular signal essential for a variety of patterning events during development. The protein is Warthog protein 5 (wrt-5) of Caenorhabditis elegans.